We begin with the raw amino-acid sequence, 859 residues long: Glucans biosynthesis glucosyltransferase H (859 aa).

The next 6 helical transmembrane spans lie at 144 to 166 (YILL…GILP), 200 to 222 (LLLF…MGFL), 523 to 545 (VMSY…LLAV), 573 to 595 (VALF…ILIW), 608 to 630 (VTVS…MLFH), and 684 to 706 (SFLW…SVIS).

The protein belongs to the glycosyltransferase 2 family. OpgH subfamily.

It localises to the cell inner membrane. Its pathway is glycan metabolism; osmoregulated periplasmic glucan (OPG) biosynthesis. Its function is as follows. Involved in the biosynthesis of osmoregulated periplasmic glucans (OPGs). This is Glucans biosynthesis glucosyltransferase H from Pseudomonas syringae pv. tomato (strain ATCC BAA-871 / DC3000).